A 358-amino-acid polypeptide reads, in one-letter code: Holliday junction branch migration complex subunit RuvB (358 aa).

Residues 1 to 24 (MSIQTDDFAAPPPKRILSGAPASP) are disordered. The segment at 5–194 (TDDFAAPPPK…FGIVARLEFY (190 aa)) is large ATPase domain (RuvB-L). ATP-binding positions include L33, R34, G75, K78, T79, T80, 141–143 (EDY), R184, Y194, and R231. T79 is a binding site for Mg(2+). Residues 195–265 (SPEELASIVR…IAHRALVMLD (71 aa)) form a small ATPAse domain (RuvB-S) region. A head domain (RuvB-H) region spans residues 268–358 (PQGFDLMDRK…GDMFGAMRPE (91 aa)). DNA is bound by residues R304, R323, and R328.

This sequence belongs to the RuvB family. Homohexamer. Forms an RuvA(8)-RuvB(12)-Holliday junction (HJ) complex. HJ DNA is sandwiched between 2 RuvA tetramers; dsDNA enters through RuvA and exits via RuvB. An RuvB hexamer assembles on each DNA strand where it exits the tetramer. Each RuvB hexamer is contacted by two RuvA subunits (via domain III) on 2 adjacent RuvB subunits; this complex drives branch migration. In the full resolvosome a probable DNA-RuvA(4)-RuvB(12)-RuvC(2) complex forms which resolves the HJ.

It is found in the cytoplasm. It carries out the reaction ATP + H2O = ADP + phosphate + H(+). Functionally, the RuvA-RuvB-RuvC complex processes Holliday junction (HJ) DNA during genetic recombination and DNA repair, while the RuvA-RuvB complex plays an important role in the rescue of blocked DNA replication forks via replication fork reversal (RFR). RuvA specifically binds to HJ cruciform DNA, conferring on it an open structure. The RuvB hexamer acts as an ATP-dependent pump, pulling dsDNA into and through the RuvAB complex. RuvB forms 2 homohexamers on either side of HJ DNA bound by 1 or 2 RuvA tetramers; 4 subunits per hexamer contact DNA at a time. Coordinated motions by a converter formed by DNA-disengaged RuvB subunits stimulates ATP hydrolysis and nucleotide exchange. Immobilization of the converter enables RuvB to convert the ATP-contained energy into a lever motion, pulling 2 nucleotides of DNA out of the RuvA tetramer per ATP hydrolyzed, thus driving DNA branch migration. The RuvB motors rotate together with the DNA substrate, which together with the progressing nucleotide cycle form the mechanistic basis for DNA recombination by continuous HJ branch migration. Branch migration allows RuvC to scan DNA until it finds its consensus sequence, where it cleaves and resolves cruciform DNA. This Albidiferax ferrireducens (strain ATCC BAA-621 / DSM 15236 / T118) (Rhodoferax ferrireducens) protein is Holliday junction branch migration complex subunit RuvB.